The chain runs to 25 residues: Mu-conotoxin CnIIIB (25 aa).

Residue Gln-1 is modified to Pyrrolidone carboxylic acid; partial. Cystine bridges form between Cys-3-Cys-15, Cys-4-Cys-21, and Cys-10-Cys-22.

Belongs to the conotoxin M superfamily. Expressed by the venom duct.

The protein resides in the secreted. In terms of biological role, mu-conotoxins block voltage-gated sodium channels (Nav). This synthetic toxin blocks slightly but irreversibly tetrodotoxin-resistant VGSCs. The polypeptide is Mu-conotoxin CnIIIB (Conus consors (Singed cone)).